We begin with the raw amino-acid sequence, 150 residues long: Avidin-related protein 2 (150 aa).

The signal sequence occupies residues 1 to 24 (MVHATSPLLLLLLLSLALVAPSLS). The 122-residue stretch at 26–147 (RKCSLTGEWD…GNNDFTRQHT (122 aa)) folds into the Avidin-like domain. Cysteine 28 and cysteine 105 are joined by a disulfide. Biotin contacts are provided by asparagine 36, serine 40, tyrosine 57, threonine 59, and aspartate 63. Asparagine 67 and asparagine 93 each carry an N-linked (GlcNAc...) asparagine glycan. Residues serine 95, serine 99, and asparagine 140 each coordinate biotin.

Homotetramer. Post-translationally, glycosylated.

The protein localises to the secreted. In terms of biological role, forms a strong non-covalent specific complex with biotin. This Gallus gallus (Chicken) protein is Avidin-related protein 2 (AVR2).